The primary structure comprises 218 residues: Ependymin (218 aa).

Positions 1–20 are cleaved as a signal peptide; sequence MHTVKLLCVVFSCLCAVAWG. Asn74 and Asn97 each carry an N-linked (GlcNAc...) asparagine glycan.

The protein belongs to the ependymin family. Forms disulfide-linked dimers. Binds calcium through the terminal sialic acids.

Its subcellular location is the secreted. May play a role in neural plasticity. May be involved during axon regeneration. The protein is Ependymin (epd) of Devario aequipinnatus (Giant danio).